The sequence spans 793 residues: Protein zer-1 homolog (793 aa).

LRR repeat units follow at residues 84–108, 187–210, and 269–294; these read RTSL…LMRH, LHDL…ALGS, and LRHL…ESTT.

The protein belongs to the zyg-11 family.

In terms of biological role, serves as substrate adapter subunit in an E3 ubiquitin ligase complex CG12084-cul-2-elongin BC. Targets substrates bearing N-terminal glycine degrons for proteasomal degradation. The polypeptide is Protein zer-1 homolog (Drosophila melanogaster (Fruit fly)).